The sequence spans 412 residues: Trehalose synthase (412 aa).

This sequence belongs to the glycosyltransferase group 1 family. Glycosyltransferase 4 subfamily. As to quaternary structure, homodimer. It depends on Mg(2+) as a cofactor.

The enzyme catalyses an NDP-alpha-D-glucose + D-glucose = alpha,alpha-trehalose + a ribonucleoside 5'-diphosphate + H(+). Its function is as follows. Synthesizes trehalose from ADP-glucose and glucose. Has a much lower activity toward UDP-glucose and GDP-glucose. The reaction is reversible, the equilibrium strongly favors trehalose synthesis. This is Trehalose synthase from Pyrococcus furiosus (strain ATCC 43587 / DSM 3638 / JCM 8422 / Vc1).